A 480-amino-acid polypeptide reads, in one-letter code: UDP-glucose 6-dehydrogenase 4 (480 aa).

Residues 3–20 (KICCIGAGYVGGPTMAVI), aspartate 33, arginine 38, threonine 90, threonine 128, and glutamate 161 contribute to the NAD(+) site. Substrate-binding positions include 157 to 161 (EFLAE), lysine 216, 216 to 223 (KLAANAFL), 256 to 269 (RIGSKFLNASVGFG), and glycine 269. Catalysis depends on cysteine 272, which acts as the Nucleophile. Lysine 275 serves as a coordination point for NAD(+). Residues phenylalanine 334 and lysine 335 each coordinate substrate. Arginine 342 is an NAD(+) binding site. Arginine 447 contacts substrate.

This sequence belongs to the UDP-glucose/GDP-mannose dehydrogenase family.

The catalysed reaction is UDP-alpha-D-glucose + 2 NAD(+) + H2O = UDP-alpha-D-glucuronate + 2 NADH + 3 H(+). It functions in the pathway nucleotide-sugar biosynthesis; UDP-alpha-D-glucuronate biosynthesis; UDP-alpha-D-glucuronate from UDP-alpha-D-glucose: step 1/1. Its activity is regulated as follows. Inhibited by UDP-xylose. Involved in the biosynthesis of UDP-glucuronic acid (UDP-GlcA), providing nucleotide sugars for cell-wall polymers. The chain is UDP-glucose 6-dehydrogenase 4 from Arabidopsis thaliana (Mouse-ear cress).